Consider the following 315-residue polypeptide: MKFKHKSVLLHETIDNLNPKDGGLYVDATFGGGGHARYLLSKLNKGTVIGFDQDEYAISMAKESFAKELQVGAEPRLMLVHDNFCHLKENLVELGISDGIDGIYYDLGVSSPQFDQPERGFSYRFDARLDMRMDQSQELDAYTIVNTWSQKELSDVLYKYGDEKFSRQIARKIVDRRKEKPIVTTFDLVDVIKDAIPAYARRSGGHPAKKSFQAIRVAVNDELGVLQESLEEAIKLLKPGGRISVITFQSHEDKIVKKIFKKYSEVEIPRGMPMVPADSKPTLRLISRKPIMASSDELEENNRSHSAKLRVAEKL.

S-adenosyl-L-methionine-binding positions include 33–35 (GGH), D52, F84, D106, and Q113. Residues 294 to 315 (SSDELEENNRSHSAKLRVAEKL) form a disordered region.

The protein belongs to the methyltransferase superfamily. RsmH family.

The protein resides in the cytoplasm. The catalysed reaction is cytidine(1402) in 16S rRNA + S-adenosyl-L-methionine = N(4)-methylcytidine(1402) in 16S rRNA + S-adenosyl-L-homocysteine + H(+). Its function is as follows. Specifically methylates the N4 position of cytidine in position 1402 (C1402) of 16S rRNA. The protein is Ribosomal RNA small subunit methyltransferase H of Lactobacillus johnsonii (strain CNCM I-12250 / La1 / NCC 533).